The sequence spans 154 residues: Protein X (154 aa).

Positions 68–117 are mitochondrial targeting sequence; that stretch reads PCALRFTSARCMETTVNAHQILPKVLYKRTLGLPAMSTTDLEAYFKDCVF.

It belongs to the orthohepadnavirus protein X family. In terms of assembly, may form homodimer. May interact with host CEBPA, CFLAR, CREB1, DDB1, E4F1, HBXIP, HSPD1/HSP60, NFKBIA, POLR2E and SMAD4. Interacts with host SMC5-SMC6 complex and induces its degradation. Interacts with host TRPC4AP; leading to prevent ubiquitination of TRPC4AP. Interacts with host PLSCR1; this interaction promotes ubiquitination and degradation of HBx and impairs HBx-mediated cell proliferation. Post-translationally, a fraction may be phosphorylated in insect cells and HepG2 cells, a human hepatoblastoma cell line. Phosphorylated in vitro by host protein kinase C or mitogen-activated protein kinase. N-acetylated in insect cells.

The protein localises to the host cytoplasm. Its subcellular location is the host nucleus. It localises to the host mitochondrion. Its function is as follows. Multifunctional protein that plays a role in silencing host antiviral defenses and promoting viral transcription. Does not seem to be essential for HBV infection. May be directly involved in development of cirrhosis and liver cancer (hepatocellular carcinoma). Most of cytosolic activities involve modulation of cytosolic calcium. The effect on apoptosis is controversial depending on the cell types in which the studies have been conducted. May induce apoptosis by localizing in mitochondria and causing loss of mitochondrial membrane potential. May also modulate apoptosis by binding host CFLAR, a key regulator of the death-inducing signaling complex (DISC). Promotes viral transcription by using the host E3 ubiquitin ligase DDB1 to target the SMC5-SMC6 complex to proteasomal degradation. This host complex would otherwise bind to viral episomal DNA, and prevents its transcription. Moderately stimulates transcription of many different viral and cellular transcription elements. Promoters and enhancers stimulated by HBx contain DNA binding sites for NF-kappa-B, AP-1, AP-2, c-EBP, ATF/CREB, or the calcium-activated factor NF-AT. The sequence is that of Protein X from Homo sapiens (Human).